A 189-amino-acid chain; its full sequence is Transmembrane protein 229b (189 aa).

Residues 1–17 (MATTVTPEPLTALSRWY) lie on the Cytoplasmic side of the membrane. Residues 18-38 (LYAIHGYFCEVMFTAAWEFVV) traverse the membrane as a helical segment. Residues 39-43 (NCNWK) are Extracellular-facing. A helical membrane pass occupies residues 44–64 (FPGVTSVWALFIYGTCILIVE). Residues 65–75 (RMYLCLKDRCN) are Cytoplasmic-facing. A helical transmembrane segment spans residues 76 to 96 (VLLRCIIYTLWTYFWEFGTGF). The Extracellular portion of the chain corresponds to 97 to 114 (LLRQFNACPWDYSEFKYN). The chain crosses the membrane as a helical span at residues 115 to 135 (FMGLITAEYAVPWFCASFIVE). Residues 136–189 (RLVIRNTLRLRFDEVAESGQAEERLDRGGGGRGGRRGRGARAGATSANGYVKVD) lie on the Cytoplasmic side of the membrane. The tract at residues 158–189 (ERLDRGGGGRGGRRGRGARAGATSANGYVKVD) is disordered.

This sequence belongs to the TMEM229 family.

The protein resides in the membrane. This chain is Transmembrane protein 229b (tmem229b), found in Danio rerio (Zebrafish).